The primary structure comprises 222 residues: Beta-casein (222 aa).

A signal peptide spans Met-1 to Ala-15. Thr-27 carries the post-translational modification Phosphothreonine. Phosphoserine occurs at positions 30, 32, 33, and 34.

Belongs to the beta-casein family. In terms of tissue distribution, mammary gland specific. Secreted in milk.

It localises to the secreted. In terms of biological role, important role in determination of the surface properties of the casein micelles. This is Beta-casein (CSN2) from Ovis aries (Sheep).